Consider the following 500-residue polypeptide: Glycerol kinase (500 aa).

Thr-14 is an ADP binding site. ATP-binding residues include Thr-14, Thr-15, and Ser-16. Thr-14 contacts sn-glycerol 3-phosphate. Arg-18 is a binding site for ADP. Arg-84, Glu-85, and Tyr-136 together coordinate sn-glycerol 3-phosphate. Glycerol-binding residues include Arg-84, Glu-85, and Tyr-136. His-232 is modified (phosphohistidine; by HPr). Residue Asp-246 coordinates sn-glycerol 3-phosphate. Glycerol-binding residues include Asp-246 and Gln-247. Residues Thr-268 and Gly-311 each coordinate ADP. Thr-268, Gly-311, Gln-315, and Gly-412 together coordinate ATP. 2 residues coordinate ADP: Gly-412 and Asn-416.

Belongs to the FGGY kinase family. As to quaternary structure, homotetramer and homodimer (in equilibrium). In terms of processing, the phosphoenolpyruvate-dependent sugar phosphotransferase system (PTS), including enzyme I, and histidine-containing protein (HPr) are required for the phosphorylation, which leads to the activation of the enzyme.

It catalyses the reaction glycerol + ATP = sn-glycerol 3-phosphate + ADP + H(+). It functions in the pathway polyol metabolism; glycerol degradation via glycerol kinase pathway; sn-glycerol 3-phosphate from glycerol: step 1/1. With respect to regulation, activated by phosphorylation and inhibited by fructose 1,6-bisphosphate (FBP). Key enzyme in the regulation of glycerol uptake and metabolism. Catalyzes the phosphorylation of glycerol to yield sn-glycerol 3-phosphate. This chain is Glycerol kinase, found in Streptococcus uberis (strain ATCC BAA-854 / 0140J).